The following is a 346-amino-acid chain: Ribosomal RNA small subunit methyltransferase H (346 aa).

S-adenosyl-L-methionine is bound by residues Gly47–Tyr49, Asp65, Phe92, Asp113, and Gln120. A disordered region spans residues Ala294–Ser346. Residues Arg314–Gly327 are compositionally biased toward basic and acidic residues. The segment covering Asp328–Leu337 has biased composition (low complexity).

The protein belongs to the methyltransferase superfamily. RsmH family.

It localises to the cytoplasm. The enzyme catalyses cytidine(1402) in 16S rRNA + S-adenosyl-L-methionine = N(4)-methylcytidine(1402) in 16S rRNA + S-adenosyl-L-homocysteine + H(+). In terms of biological role, specifically methylates the N4 position of cytidine in position 1402 (C1402) of 16S rRNA. This chain is Ribosomal RNA small subunit methyltransferase H, found in Azorhizobium caulinodans (strain ATCC 43989 / DSM 5975 / JCM 20966 / LMG 6465 / NBRC 14845 / NCIMB 13405 / ORS 571).